The following is a 133-amino-acid chain: Small ribosomal subunit protein uS8 (133 aa).

This sequence belongs to the universal ribosomal protein uS8 family. In terms of assembly, part of the 30S ribosomal subunit.

One of the primary rRNA binding proteins, it binds directly to 16S rRNA central domain where it helps coordinate assembly of the platform of the 30S subunit. The polypeptide is Small ribosomal subunit protein uS8 (Aeropyrum pernix (strain ATCC 700893 / DSM 11879 / JCM 9820 / NBRC 100138 / K1)).